We begin with the raw amino-acid sequence, 185 residues long: Ribosome-recycling factor (185 aa).

This sequence belongs to the RRF family.

It localises to the cytoplasm. In terms of biological role, responsible for the release of ribosomes from messenger RNA at the termination of protein biosynthesis. May increase the efficiency of translation by recycling ribosomes from one round of translation to another. The chain is Ribosome-recycling factor from Pseudomonas paraeruginosa (strain DSM 24068 / PA7) (Pseudomonas aeruginosa (strain PA7)).